We begin with the raw amino-acid sequence, 760 residues long: RxLR effector protein PSR2 (760 aa).

The first 21 residues, 1–21, serve as a signal peptide directing secretion; that stretch reads MGCRYAVLALAVAYFAGSIAA. The RxLR-dEER motif lies at 47–62; that stretch reads RFLRAANTADERNEDR. The stretch at 87–134 is one WY1 repeat; sequence PLLSWFEKKKSPDYVFLKLKINKGKQQLFDHPDWNVWVQYTTSVVKSD. The 7 X 93 AA tandem repeats stretch occupies residues 87–760; the sequence is PLLSWFEKKK…TTKYMERYGQ (674 aa). Residues 135-221 form an LWY2 repeat; that stretch reads PEEAMIAALR…MKLYNSKPVN (87 aa). The LWY3 repeat unit spans residues 222 to 312; sequence KKQQVTLVSM…KYVDNYNRDF (91 aa). Residues 313 to 403 form an LWY4 repeat; sequence PDEATTVMAT…KYVEDLNLKP (91 aa). One copy of the LWY5 repeat lies at 404-496; that stretch reads EHNDLQVSII…KFLEHYYKSF (93 aa). An LWY6 repeat occupies 497-584; the sequence is PTPMMSALAK…RYLDEFNKKF (88 aa). An LWY7 repeat occupies 585 to 760; it reads PDEKVSMTDT…TTKYMERYGQ (176 aa).

It belongs to the RxLR effector family. Interacts with host dsRNA-binding protein DRB4.

It is found in the secreted. Its subcellular location is the host cell. Its function is as follows. Secreted effector that possesses RNA silencing suppression activity by inhibiting the biogenesis of small RNAs in the host plant to promote enhanced susceptibility of host to the pathogen during infection. Interferes with secondary siRNA production by associating with host dsRNA-binding protein DRB4. Inhibits the host salicylic acid pathway during infection. This Phytophthora infestans (strain T30-4) (Potato late blight agent) protein is RxLR effector protein PSR2.